A 669-amino-acid chain; its full sequence is NADH-ubiquinone oxidoreductase chain 5 (669 aa).

14 helical membrane passes run 3–23 (LLIVFLPLLGSSVAGFFGRFL), 40–60 (SILSLIAFYEVALGASACYLR), 76–96 (FLFDSLTVVMLIVVTFISSLV), 113–133 (FMCYLSIFTFFMLMLVTGDNF), 136–156 (LFLGWEGVGLASYLLIHFWFT), 217–237 (AISLICILLFIGAVGKSAQIG), 250–270 (TPVSALIHAATMVTAGVFMIA), 283–303 (LIVITFAGAMTSFLAATTGIL), 319–339 (LGYMIFACGISNYSVSVFHLM), 340–360 (NHAFFKALLFLSAGSVIHAMS), 375–395 (FPLTYAMMLIGSLSLIGFPFL), 417–437 (NFAFWLGSISVLFTSYYSFRL), 461–481 (IPMAIPSILLALGSLFVGYLA), and 619–639 (GFVYHYAFAMLLGLTLFVTFF).

Belongs to the complex I subunit 5 family. Complex I is composed of at least 49 different subunits.

It localises to the mitochondrion inner membrane. The catalysed reaction is a ubiquinone + NADH + 5 H(+)(in) = a ubiquinol + NAD(+) + 4 H(+)(out). In terms of biological role, core subunit of the mitochondrial membrane respiratory chain NADH dehydrogenase (Complex I) that is believed to belong to the minimal assembly required for catalysis. Complex I functions in the transfer of electrons from NADH to the respiratory chain. The immediate electron acceptor for the enzyme is believed to be ubiquinone. This chain is NADH-ubiquinone oxidoreductase chain 5 (ND5), found in Arabidopsis thaliana (Mouse-ear cress).